A 157-amino-acid chain; its full sequence is Ribosomal RNA large subunit methyltransferase H (157 aa).

Residues Leu73, Gly105, and 124–129 each bind S-adenosyl-L-methionine; that span reads MSKMTF.

This sequence belongs to the RNA methyltransferase RlmH family. In terms of assembly, homodimer.

Its subcellular location is the cytoplasm. The catalysed reaction is pseudouridine(1915) in 23S rRNA + S-adenosyl-L-methionine = N(3)-methylpseudouridine(1915) in 23S rRNA + S-adenosyl-L-homocysteine + H(+). Its function is as follows. Specifically methylates the pseudouridine at position 1915 (m3Psi1915) in 23S rRNA. The protein is Ribosomal RNA large subunit methyltransferase H of Bacteroides fragilis (strain ATCC 25285 / DSM 2151 / CCUG 4856 / JCM 11019 / LMG 10263 / NCTC 9343 / Onslow / VPI 2553 / EN-2).